Reading from the N-terminus, the 290-residue chain is HTH-type transcriptional activator RhaR (290 aa).

Residues 179–277 (DLIMSALQQS…GMTPRDYRQR (99 aa)) form the HTH araC/xylS-type domain. DNA-binding regions (H-T-H motif) lie at residues 196–217 (ADFC…RQQT) and 244–267 (ISDI…TREA).

In terms of assembly, binds DNA as a dimer.

It localises to the cytoplasm. In terms of biological role, activates expression of the rhaSR operon in response to L-rhamnose. The sequence is that of HTH-type transcriptional activator RhaR from Yersinia pseudotuberculosis serotype O:1b (strain IP 31758).